Here is a 708-residue protein sequence, read N- to C-terminus: Glycine--tRNA ligase beta subunit (708 aa).

Belongs to the class-II aminoacyl-tRNA synthetase family. In terms of assembly, tetramer of two alpha and two beta subunits.

It is found in the cytoplasm. The catalysed reaction is tRNA(Gly) + glycine + ATP = glycyl-tRNA(Gly) + AMP + diphosphate. This is Glycine--tRNA ligase beta subunit from Methylobacillus flagellatus (strain ATCC 51484 / DSM 6875 / VKM B-1610 / KT).